The following is a 449-amino-acid chain: Serine/threonine-protein phosphatase 2A activator 2 (449 aa).

2 disordered regions span residues 1–72 (MDSS…DPST) and 378–416 (MSEQ…PTGW). Over residues 54 to 69 (NPTPVPETPALPPRPD) the composition is skewed to pro residues. Positions 389–403 (EENEEEGGEVEVYDD) are enriched in acidic residues.

Belongs to the PTPA-type PPIase family.

The protein resides in the cytoplasm. The catalysed reaction is [protein]-peptidylproline (omega=180) = [protein]-peptidylproline (omega=0). PPIases accelerate the folding of proteins. It catalyzes the cis-trans isomerization of proline imidic peptide bonds in oligopeptides. Acts as a regulatory subunit for PP2A-like phosphatases modulating their activity or substrate specificity, probably by inducing a conformational change in the catalytic subunit, a direct target of the PPIase. Can reactivate inactive phosphatase PP2A-phosphatase methylesterase complexes (PP2Ai) in presence of ATP and Mg(2+) by dissociating the inactive form from the complex. The sequence is that of Serine/threonine-protein phosphatase 2A activator 2 (rrd-2) from Neurospora crassa (strain ATCC 24698 / 74-OR23-1A / CBS 708.71 / DSM 1257 / FGSC 987).